A 396-amino-acid polypeptide reads, in one-letter code: Phosphoglycerate kinase (396 aa).

Residues 21 to 23, arginine 36, 59 to 62, arginine 119, and arginine 156 each bind substrate; these read DFN and HLGK. ATP contacts are provided by residues lysine 206, glutamate 325, and 352-355; that span reads GGDS.

Belongs to the phosphoglycerate kinase family. As to quaternary structure, monomer.

It is found in the cytoplasm. It catalyses the reaction (2R)-3-phosphoglycerate + ATP = (2R)-3-phospho-glyceroyl phosphate + ADP. Its pathway is carbohydrate degradation; glycolysis; pyruvate from D-glyceraldehyde 3-phosphate: step 2/5. In Macrococcus caseolyticus (strain JCSC5402) (Macrococcoides caseolyticum), this protein is Phosphoglycerate kinase.